A 296-amino-acid chain; its full sequence is Phosphoribosylaminoimidazole-succinocarboxamide synthase (296 aa).

Belongs to the SAICAR synthetase family.

The catalysed reaction is 5-amino-1-(5-phospho-D-ribosyl)imidazole-4-carboxylate + L-aspartate + ATP = (2S)-2-[5-amino-1-(5-phospho-beta-D-ribosyl)imidazole-4-carboxamido]succinate + ADP + phosphate + 2 H(+). It participates in purine metabolism; IMP biosynthesis via de novo pathway; 5-amino-1-(5-phospho-D-ribosyl)imidazole-4-carboxamide from 5-amino-1-(5-phospho-D-ribosyl)imidazole-4-carboxylate: step 1/2. In Lachnospira eligens (strain ATCC 27750 / DSM 3376 / VPI C15-48 / C15-B4) (Eubacterium eligens), this protein is Phosphoribosylaminoimidazole-succinocarboxamide synthase.